An 882-amino-acid polypeptide reads, in one-letter code: DNA mismatch repair protein MutS (882 aa).

Residue 629–636 coordinates ATP; the sequence is GPNMGGKS.

It belongs to the DNA mismatch repair MutS family.

Functionally, this protein is involved in the repair of mismatches in DNA. It is possible that it carries out the mismatch recognition step. This protein has a weak ATPase activity. The chain is DNA mismatch repair protein MutS from Ralstonia pickettii (strain 12J).